The following is a 424-amino-acid chain: Probable aminotransferase TAT4 (424 aa).

It belongs to the class-I pyridoxal-phosphate-dependent aminotransferase family. Pyridoxal 5'-phosphate serves as cofactor.

The sequence is that of Probable aminotransferase TAT4 from Arabidopsis thaliana (Mouse-ear cress).